Here is a 396-residue protein sequence, read N- to C-terminus: Polygalacturonase (396 aa).

A signal peptide spans 1-22 (MDLKFKVHFALVLLFLAHFGES). 6 N-linked (GlcNAc...) asparagine glycosylation sites follow: N143, N151, N174, N181, N203, and N208. PbH1 repeat units follow at residues 172-198 (CKNL…HVSR) and 199-220 (SSSV…SVGD). D213 functions as the Proton donor in the catalytic mechanism. The cysteines at positions 215 and 232 are disulfide-linked. Residue H236 is part of the active site. PbH1 repeat units follow at residues 252 to 273 (VVGV…RIKT), 282 to 303 (VNDV…VIDQ), and 316 to 356 (PSQV…EVGD). N-linked (GlcNAc...) asparagine glycosylation is found at N259 and N294. A disordered region spans residues 364 to 396 (KEGPAKSSCENIKPSLKGKQNPPVCTASAASSS). An intrachain disulfide couples C372 to C388.

It belongs to the glycosyl hydrolase 28 family. As to expression, pollen.

Its subcellular location is the secreted. It localises to the cell wall. It carries out the reaction (1,4-alpha-D-galacturonosyl)n+m + H2O = (1,4-alpha-D-galacturonosyl)n + (1,4-alpha-D-galacturonosyl)m.. In terms of biological role, may function in depolymerizing pectin during pollen development, germination, and tube growth. In Nicotiana tabacum (Common tobacco), this protein is Polygalacturonase (PG1).